Reading from the N-terminus, the 112-residue chain is Low molecular weight protein antigen 6 (112 aa).

The protein resides in the secreted. The chain is Low molecular weight protein antigen 6 (cfp6) from Mycobacterium bovis (strain ATCC BAA-935 / AF2122/97).